The chain runs to 191 residues: uncharacterized protein (191 aa).

Positions 1–17 are cleaved as a signal peptide; the sequence is MESIILSIAIFIGVLLG. The tract at residues 82–148 is disordered; it reads TFSGSRTSPD…DVGAGSGSSI (67 aa). Residues 168 to 188 traverse the membrane as a helical segment; the sequence is VAVLITAAILSAPVTAIALLE.

Its subcellular location is the membrane. This is an uncharacterized protein from Saccharomyces cerevisiae (strain ATCC 204508 / S288c) (Baker's yeast).